An 88-amino-acid chain; its full sequence is Apolipoprotein C-I (88 aa).

The first 26 residues, 1-26, serve as a signal peptide directing secretion; sequence MRLLISLPVLIVVLAMALEGPAPAQA.

The protein belongs to the apolipoprotein C1 family.

The protein localises to the secreted. Inhibitor of lipoprotein binding to the low density lipoprotein (LDL) receptor, LDL receptor-related protein, and very low density lipoprotein (VLDL) receptor. Associates with high density lipoproteins (HDL) and the triacylglycerol-rich lipoproteins in the plasma and makes up about 10% of the protein of the VLDL and 2% of that of HDL. Appears to interfere directly with fatty acid uptake and is also the major plasma inhibitor of cholesteryl ester transfer protein (CETP). Modulates the interaction of APOE with beta-migrating VLDL and inhibits binding of beta-VLDL to the LDL receptor-related protein. Binds free fatty acids and reduces their intracellular esterification. The polypeptide is Apolipoprotein C-I (APOC1) (Mesocricetus auratus (Golden hamster)).